The following is a 541-amino-acid chain: MDSRRSLLVLALIFISFLVYQQWQLDKNPPVQTEQTTSITATSDVPASSPSNSQAIADSQTRGRIITLENDVFRLKIDTLGGDVISSELLKYDAELDSKTPFELLKDTKEHIYIAQSGLIGKNGIDTRSGRAQYQIEGDNFKLAEGQESLSVPLLFEKDGVTYQKIFVLKRGSYDLGVDYKIDNQSGQAIEVEPYGQLKHSIVESSGNVAMPTYTGGAYSSSETNYKKYSFADMQDNNLSIDTKAGWVAVLQHYFVSAWIPNQDVNNQLYTITDSKNNVASIGYRGPVVTIPAGSQETITSSLWTGPKLQNQMATVANNLDLTVDYGWAWFIAKPLFWLLTFIQGIVSNWGLAIICVTIVVKAILYPLTKAQYTSMAKMRILQPKMQEMRERFGDDRQRMSQEMMKLYKEEKVNPLGGCLPILLQMPIFIALYWTFLEAVELRHAPFFGWIQDLSAQDPYYILPILMGISMFLLQKMSPTPVTDPTQQKVMNFMPLIFMVFFLWFPSGLVLYWLVSNLITIAQQQLIYRGLEKKGLHSRKK.

Residues 6–26 (SLLVLALIFISFLVYQQWQLD) form a helical membrane-spanning segment. A disordered region spans residues 34 to 56 (EQTTSITATSDVPASSPSNSQAI). 4 consecutive transmembrane segments (helical) span residues 337 to 357 (FWLLTFIQGIVSNWGLAIICV), 416 to 436 (LGGCLPILLQMPIFIALYWTF), 454 to 474 (LSAQDPYYILPILMGISMFLL), and 495 to 515 (PLIFMVFFLWFPSGLVLYWLV).

Belongs to the OXA1/ALB3/YidC family. Type 1 subfamily. As to quaternary structure, interacts with the Sec translocase complex via SecD. Specifically interacts with transmembrane segments of nascent integral membrane proteins during membrane integration.

The protein localises to the cell inner membrane. Its function is as follows. Required for the insertion and/or proper folding and/or complex formation of integral membrane proteins into the membrane. Involved in integration of membrane proteins that insert both dependently and independently of the Sec translocase complex, as well as at least some lipoproteins. Aids folding of multispanning membrane proteins. This is Membrane protein insertase YidC from Haemophilus influenzae (strain PittEE).